The following is a 411-amino-acid chain: LL-diaminopimelate aminotransferase (411 aa).

Residues tyrosine 15 and glycine 42 each contribute to the substrate site. Residues tyrosine 72, serine 105–lysine 106, tyrosine 129, asparagine 186, tyrosine 217, and serine 245–serine 247 contribute to the pyridoxal 5'-phosphate site. Residues lysine 106, tyrosine 129, and asparagine 186 each contribute to the substrate site. An N6-(pyridoxal phosphate)lysine modification is found at lysine 248. Arginine 256 and asparagine 287 together coordinate pyridoxal 5'-phosphate. Residues asparagine 287 and arginine 382 each contribute to the substrate site.

Belongs to the class-I pyridoxal-phosphate-dependent aminotransferase family. LL-diaminopimelate aminotransferase subfamily. As to quaternary structure, homodimer. It depends on pyridoxal 5'-phosphate as a cofactor.

The catalysed reaction is (2S,6S)-2,6-diaminopimelate + 2-oxoglutarate = (S)-2,3,4,5-tetrahydrodipicolinate + L-glutamate + H2O + H(+). It functions in the pathway amino-acid biosynthesis; L-lysine biosynthesis via DAP pathway; LL-2,6-diaminopimelate from (S)-tetrahydrodipicolinate (aminotransferase route): step 1/1. In terms of biological role, involved in the synthesis of meso-diaminopimelate (m-DAP or DL-DAP), required for both lysine and peptidoglycan biosynthesis. Catalyzes the direct conversion of tetrahydrodipicolinate to LL-diaminopimelate. Is also able to use meso-diaminopimelate, lysine or ornithine as substrates. The protein is LL-diaminopimelate aminotransferase of Protochlamydia amoebophila (strain UWE25).